An 84-amino-acid chain; its full sequence is Large ribosomal subunit protein bL27 (84 aa).

Positions 1 to 22 (MAHKKAGGSTRNGRDSESKRLG) are disordered.

It belongs to the bacterial ribosomal protein bL27 family.

This is Large ribosomal subunit protein bL27 from Shewanella baltica (strain OS223).